The primary structure comprises 218 residues: Pyridoxine/pyridoxamine 5'-phosphate oxidase (218 aa).

Substrate-binding positions include 14–17 and lysine 72; that span reads RREY. FMN-binding positions include 67–72, 82–83, arginine 88, lysine 89, and glutamine 111; these read RIVLLK and YT. Substrate contacts are provided by tyrosine 129, arginine 133, and serine 137. Residues 146-147 and tryptophan 191 contribute to the FMN site; that span reads QS. 197 to 199 provides a ligand contact to substrate; sequence RLH. Residue arginine 201 participates in FMN binding.

The protein belongs to the pyridoxamine 5'-phosphate oxidase family. In terms of assembly, homodimer. FMN is required as a cofactor.

It catalyses the reaction pyridoxamine 5'-phosphate + O2 + H2O = pyridoxal 5'-phosphate + H2O2 + NH4(+). The enzyme catalyses pyridoxine 5'-phosphate + O2 = pyridoxal 5'-phosphate + H2O2. It participates in cofactor metabolism; pyridoxal 5'-phosphate salvage; pyridoxal 5'-phosphate from pyridoxamine 5'-phosphate: step 1/1. The protein operates within cofactor metabolism; pyridoxal 5'-phosphate salvage; pyridoxal 5'-phosphate from pyridoxine 5'-phosphate: step 1/1. Its function is as follows. Catalyzes the oxidation of either pyridoxine 5'-phosphate (PNP) or pyridoxamine 5'-phosphate (PMP) into pyridoxal 5'-phosphate (PLP). This chain is Pyridoxine/pyridoxamine 5'-phosphate oxidase, found in Klebsiella pneumoniae subsp. pneumoniae (strain ATCC 700721 / MGH 78578).